A 263-amino-acid chain; its full sequence is Microtubule-associated protein RP/EB family member 1 (263 aa).

One can recognise a Calponin-homology (CH) domain in the interval 14–116; it reads NLSRHDMLAW…FVQWFKKFFD (103 aa). Positions 180-250 constitute an EB1 C-terminal domain; that stretch reads KKAAGDDESA…LYATDEGFVI (71 aa).

Belongs to the MAPRE family.

It localises to the cytoplasm. It is found in the cytoskeleton. Its subcellular location is the microtubule organizing center. The protein resides in the centrosome. The protein localises to the golgi apparatus. It localises to the spindle. It is found in the spindle pole. In terms of biological role, plus-end tracking protein (+TIP) that binds to the plus-end of microtubules and regulates the dynamics of the microtubule cytoskeleton. Promotes cytoplasmic microtubule nucleation and elongation. Involved in mitotic spindle positioning by stabilizing microtubules and promoting dynamic connection between astral microtubules and the cortex during mitotic chromosome segregation. In Coturnix coturnix (Common quail), this protein is Microtubule-associated protein RP/EB family member 1 (MAPRE1).